We begin with the raw amino-acid sequence, 1709 residues long: MRAGWTPRGFSAFHASLLPGRHPYLAHLGPRDRGARIGSRAYSQGCCSCLWLTYKGKKEGSTKGELGPAAVTDLEIPSYSRGFLPCTPRFPTTWCRGPGCFCGTAVIAGNLGDLARIVGPSHHASQLLLLQEQDSGNHPTMAESLSEISDSLDVLEAGDEGKKKCKFKALKSFFVKKKEKEAEDTQEEEMLELSLSSSNINISSLQPVRENQPTKARAKSSMGSKALSHDSIFMLGPEPERSASKMFPSMDPQRGRPQQRSHISRTLPKPRSKVPGVVSGAMSGAVLQNVPTSAVWVAGPKITENPPSRRRRLSIIPPVIQPEIISKNLVEISLDDESPKNPQKKALPHKSLTATQSFSELSSGPDCSQSLTAFATLASTSSTQLPIGFSTPATTQGCLDSSAARHKMTLNPRKQKKNLQVIIRGLPVWFSHFQGILEGSLQCVTQTLETPNLDEPLPVEPKEEEPNLPLVSEEEKSITKPKEINEKKLGMDSADSSSQKQNNKTEMYDKKTTDQAPNTDASRSQGYPMSAAYGRRWRRKGASVSGLSGCEFKGRSLKQSSEGYGLGDRAGSSPTNKTARNVPFSHLSLEKDNMEQPTTSQPETTTPQGLLSDKDDMGRRNAGIDFGSRKASAAQPIPENMDNSMVSDPQPYHEDAASGAEKTEARASLSLMVESLSTTQEEAILSVAAEAQVFMNPSHIQLEDQEAFSFDLQKAQSKMESAQDVQTICKEKPSGNVHQTFTASVLGMTSTTAKGDVYAKTLPPRSLFQSSRKPDAEEVSSDSENIPEEGDGSEELAHGHSSQSLGKFEDEQEVFSESKSFVEDLSSSEEELDLRCLSQALEEPEDAEVFTESSSYVEKYNTSDDCSSSEEDLPLRHPAQALGKPKNQQEVSSASNNTPEEQNDFMQQLPSRCPSQPIMNPTVQQQVPTSSVGTSIKQSDSVEPIPPRHPFQPWVNPKVEQEVSSSPKSMAVEESISMKPLPPKLLCQPLMNPKVQQNMFSGSEDIAVERVISVEPLLPRYSPQSLTDPQIRQISESTAVEEGTYVEPLPPRCLSQPSERPKFLDSMSTSAEWSSPVAPTPSKYTSPPWVTPKFEELYQLSAHPESTTVEEDISKEQLLPRHLSQLTVGNKVQQLSSNFERAAIEADISGSPLPPQYATQFLKRSKVQEMTSRLEKMAVEGTSNKSPIPRRPTQSFVKFMAQQIFSESSALKRGSDVAPLPPNLPSKSLSKPEVKHQVFSDSGSANPKGGISSKMLPMKHPLQSLGRPEDPQKVFSYSERAPGKCSSFKEQLSPRQLSQALRKPEYEQKVSPVSASSPKEWRNSKKQLPPKHSSQASDRSKFQPQMSSKGPVNVPVKQSSGEKHLPSSSPFQQQVHSSSVNAAARRSVFESNSDNWFLGRDEAFAIKTKKFSQGSKNPIKSIPAPATKPGKFTIAPVRQTSTSGGIYSKKEDLESGDGNNNQHANLSNQDDVEKLFGVRLKRAPPSQKYKSEKQDNFTQLASVPSGPISSSVGRGHKIRSTSQGLLDAAGNLTKISYVADKQQSRPKSESMAKKQPACKTPGKPAGQQSDYAVSEPVWITMAKQKQKSFKAHISVKELKTKSNAGADAETKEPKYEGAGSANENQPKKMFTSSVHKQEKTAQMKPPKPTKSVGFEAQKILQVPAMEKETKRSSTLPAKFQNPVEPIEPVWFSLARKKAKAWSHMAEITQ.

Disordered stretches follow at residues 207–226 (PVRE…GSKA), 239–275 (PERS…SKVP), 451–663 (PNLD…AEKT), 763–973 (PPRS…MAVE), 1211–1382 (LKRG…SVNA), 1408–1516 (TKKF…GRGH), 1539–1571 (ADKQ…QSDY), and 1589–1653 (FKAH…KSVG). The span at 257–272 (PQQRSHISRTLPKPRS) shows a compositional bias: basic residues. Over residues 473 to 490 (EEEKSITKPKEINEKKLG) the composition is skewed to basic and acidic residues. Composition is skewed to polar residues over residues 494–505 (ADSSSQKQNNKT) and 514–527 (DQAP…SQGY). The span at 595–608 (EQPTTSQPETTTPQ) shows a compositional bias: low complexity. Positions 651–663 (PYHEDAASGAEKT) are enriched in basic and acidic residues. The segment covering 777-794 (EEVSSDSENIPEEGDGSE) has biased composition (acidic residues). Polar residues-rich tracts occupy residues 886–941 (KNQQ…QSDS), 1288–1299 (FKEQLSPRQLSQ), 1332–1350 (HSSQ…SSKG), 1366–1376 (PSSSPFQQQVH), and 1457–1469 (DGNN…LSNQ). Over residues 1502 to 1513 (SVPSGPISSSVG) the composition is skewed to low complexity. Residues 1542–1552 (QQSRPKSESMA) show a composition bias toward basic and acidic residues.

In terms of assembly, interacts with TOP2B.

It localises to the cytoplasmic vesicle. It is found in the secretory vesicle. The protein localises to the acrosome. The chain is Acrosomal protein KIAA1210 from Homo sapiens (Human).